A 385-amino-acid chain; its full sequence is Isocitrate dehydrogenase [NAD] subunit beta, mitochondrial (385 aa).

The transit peptide at 1 to 33 (MAALSRVRWLTRALVAAPNPGAWRSLCTSTVAQ) directs the protein to the mitochondrion. Lysine 199 carries the post-translational modification N6-acetyllysine.

It belongs to the isocitrate and isopropylmalate dehydrogenases family. As to quaternary structure, heterooligomer of subunits alpha (IDH3A), beta (IDH3B), and gamma (IDH3G) in the apparent ratio of 2:1:1. The heterodimer containing one IDH3A and one IDH3B subunit and the heterodimer containing one IDH3A and one IDH3G subunit assemble into a heterotetramer (which contains two subunits of IDH3A, one of IDH3B and one of IDH3G) and further into the heterooctamer. As to expression, isoform A is predominant in heart muscle; also found in brain, kidney and liver. Isoform B is present in kidney and liver.

Its subcellular location is the mitochondrion. With respect to regulation, the heterotetramer and the heterodimer composed of IDH3A and IDH3G subunits can be allosterically activated by citrate (CIT) or/and ADP, and the two activators can act independently or synergistically. The heterodimer composed of IDH3A and IDH3B subunits cannot be allosterically regulated and the allosteric regulation of the heterotetramer is through the IDH3G subunit and not the IDH3B subunit. The IDH3G subunit contains the allosteric site which consists of a CIT-binding site and an ADP-binding site, and the binding of CIT and ADP causes conformational changes at the allosteric site which are transmitted to the active site in the catalytic subunit (IDH3A) through a cascade of conformational changes at the heterodimer interface, leading to stabilization of the isocitrate-binding at the active site and thus activation of the enzyme. ATP can activate the heterotetramer and the heterodimer composed of IDH3A and IDH3G subunits at low concentrations but inhibits their activities at high concentrations, whereas ATP exhibits only inhibitory effect on the heterodimer composed of IDH3A and IDH3B subunits. In terms of biological role, plays a structural role to facilitate the assembly and ensure the full activity of the enzyme catalyzing the decarboxylation of isocitrate (ICT) into alpha-ketoglutarate. The heterodimer composed of the alpha (IDH3A) and beta (IDH3B) subunits and the heterodimer composed of the alpha (IDH3A) and gamma (IDH3G) subunits, have considerable basal activity but the full activity of the heterotetramer (containing two subunits of IDH3A, one of IDH3B and one of IDH3G) requires the assembly and cooperative function of both heterodimers. The polypeptide is Isocitrate dehydrogenase [NAD] subunit beta, mitochondrial (IDH3B) (Bos taurus (Bovine)).